Reading from the N-terminus, the 333-residue chain is 4-hydroxyproline 2-epimerase (333 aa).

Residue cysteine 90 is the Proton acceptor of the active site. Substrate is bound by residues 91-92 (GH), histidine 223, and aspartate 249. The active-site Proton donor is cysteine 253. Residue 254–255 (GT) coordinates substrate.

Belongs to the proline racemase family.

The catalysed reaction is trans-4-hydroxy-L-proline = cis-4-hydroxy-D-proline. Catalyzes the epimerization of trans-4-hydroxy-L-proline (t4LHyp) to cis-4-hydroxy-D-proline (c4DHyp). Is likely involved in a degradation pathway that converts t4LHyp to alpha-ketoglutarate. Displays no proline racemase activity. The polypeptide is 4-hydroxyproline 2-epimerase (Shewanella loihica (strain ATCC BAA-1088 / PV-4)).